The chain runs to 452 residues: Probable 1,4-beta-D-glucan cellobiohydrolase A (452 aa).

A signal peptide spans 1–17; the sequence is MHQRALLFSALAVAANA. Asparagine 81 carries N-linked (GlcNAc...) asparagine glycosylation. Glutamate 226 acts as the Nucleophile in catalysis. Residue glutamate 231 is the Proton donor of the active site. An N-linked (GlcNAc...) asparagine glycan is attached at asparagine 284. The tract at residues 406–432 is disordered; it reads DPSKPGVARGTCEHGAGDPEKVESQHP. Over residues 416–431 the composition is skewed to basic and acidic residues; that stretch reads TCEHGAGDPEKVESQH.

The protein belongs to the glycosyl hydrolase 7 (cellulase C) family.

The protein resides in the secreted. It catalyses the reaction Hydrolysis of (1-&gt;4)-beta-D-glucosidic linkages in cellulose and cellotetraose, releasing cellobiose from the non-reducing ends of the chains.. Its function is as follows. The biological conversion of cellulose to glucose generally requires three types of hydrolytic enzymes: (1) Endoglucanases which cut internal beta-1,4-glucosidic bonds; (2) Exocellobiohydrolases that cut the disaccharide cellobiose from the non-reducing end of the cellulose polymer chain; (3) Beta-1,4-glucosidases which hydrolyze the cellobiose and other short cello-oligosaccharides to glucose. The protein is Probable 1,4-beta-D-glucan cellobiohydrolase A (cbhA) of Neosartorya fischeri (strain ATCC 1020 / DSM 3700 / CBS 544.65 / FGSC A1164 / JCM 1740 / NRRL 181 / WB 181) (Aspergillus fischerianus).